Consider the following 465-residue polypeptide: Serine carboxypeptidase-like 46 (465 aa).

The first 25 residues, methionine 1 to serine 25, serve as a signal peptide directing secretion. 3 disulfides stabilise this stretch: cysteine 88–cysteine 344, cysteine 245–cysteine 263, and cysteine 288–cysteine 313. 2 N-linked (GlcNAc...) asparagine glycosylation sites follow: asparagine 137 and asparagine 170. Serine 179 is a catalytic residue. Asparagine 246 carries N-linked (GlcNAc...) asparagine glycosylation. Catalysis depends on residues aspartate 381 and histidine 438.

Belongs to the peptidase S10 family. As to expression, ubiquitous.

It localises to the secreted. Probable carboxypeptidase. This chain is Serine carboxypeptidase-like 46 (SCPL46), found in Arabidopsis thaliana (Mouse-ear cress).